A 223-amino-acid polypeptide reads, in one-letter code: Small ribosomal subunit protein uS3 (223 aa).

The KH type-2 domain maps to 39–115; sequence IRKYIEKNLA…RVFINIVEIK (77 aa).

It belongs to the universal ribosomal protein uS3 family. In terms of assembly, part of the 30S ribosomal subunit. Forms a tight complex with proteins S10 and S14.

In terms of biological role, binds the lower part of the 30S subunit head. Binds mRNA in the 70S ribosome, positioning it for translation. The chain is Small ribosomal subunit protein uS3 from Leuconostoc citreum (strain KM20).